Here is a 660-residue protein sequence, read N- to C-terminus: Cysteine-rich receptor-like protein kinase 22 (660 aa).

An N-terminal signal peptide occupies residues 1–24 (MKQRSFLSILCFILLAFGVASVSA). 2 consecutive Gnk2-homologous domains span residues 25-128 (QTCI…NISF) and 137-250 (IEPQ…LFTF). The Extracellular segment spans residues 25–294 (QTCIENRKYF…DSRGVSAGIV (270 aa)). 7 N-linked (GlcNAc...) asparagine glycosylation sites follow: Asn-37, Asn-53, Asn-105, Asn-125, Asn-191, Asn-230, and Asn-256. Pro residues predominate over residues 264–273 (KPPMNVPRPP). The segment at 264-283 (KPPMNVPRPPSVGHGANTTD) is disordered. N-linked (GlcNAc...) asparagine glycans are attached at residues Asn-280 and Asn-284. The chain crosses the membrane as a helical span at residues 295 to 315 (VVITVPAVVIVLILVVLGFFI). Topologically, residues 316–660 (CWRRKSLQRT…DPLSEGLESG (345 aa)) are cytoplasmic. The region spanning 353–632 (FSKSNKLGEG…IVSMLTSNTI (280 aa)) is the Protein kinase domain. ATP contacts are provided by residues 359 to 367 (LGEGRFGEV) and Lys-381. At Tyr-426 the chain carries Phosphotyrosine. Catalysis depends on Asp-478, which acts as the Proton acceptor. Position 482 is a phosphoserine (Ser-482). Residue Thr-518 is modified to Phosphothreonine. At Tyr-526 the chain carries Phosphotyrosine.

Belongs to the protein kinase superfamily. Ser/Thr protein kinase family. CRK subfamily.

The protein localises to the membrane. The catalysed reaction is L-seryl-[protein] + ATP = O-phospho-L-seryl-[protein] + ADP + H(+). It catalyses the reaction L-threonyl-[protein] + ATP = O-phospho-L-threonyl-[protein] + ADP + H(+). The sequence is that of Cysteine-rich receptor-like protein kinase 22 (CRK22) from Arabidopsis thaliana (Mouse-ear cress).